The following is a 353-amino-acid chain: UDP-3-O-acylglucosamine N-acyltransferase (353 aa).

Catalysis depends on histidine 246, which acts as the Proton acceptor.

It belongs to the transferase hexapeptide repeat family. LpxD subfamily. As to quaternary structure, homotrimer.

The enzyme catalyses a UDP-3-O-[(3R)-3-hydroxyacyl]-alpha-D-glucosamine + a (3R)-hydroxyacyl-[ACP] = a UDP-2-N,3-O-bis[(3R)-3-hydroxyacyl]-alpha-D-glucosamine + holo-[ACP] + H(+). Its pathway is bacterial outer membrane biogenesis; LPS lipid A biosynthesis. Its function is as follows. Catalyzes the N-acylation of UDP-3-O-acylglucosamine using 3-hydroxyacyl-ACP as the acyl donor. Is involved in the biosynthesis of lipid A, a phosphorylated glycolipid that anchors the lipopolysaccharide to the outer membrane of the cell. This Chlorobaculum tepidum (strain ATCC 49652 / DSM 12025 / NBRC 103806 / TLS) (Chlorobium tepidum) protein is UDP-3-O-acylglucosamine N-acyltransferase.